A 179-amino-acid polypeptide reads, in one-letter code: Large ribosomal subunit protein uL6 (179 aa).

Belongs to the universal ribosomal protein uL6 family. In terms of assembly, part of the 50S ribosomal subunit.

Its function is as follows. This protein binds to the 23S rRNA, and is important in its secondary structure. It is located near the subunit interface in the base of the L7/L12 stalk, and near the tRNA binding site of the peptidyltransferase center. This Rhodococcus opacus (strain B4) protein is Large ribosomal subunit protein uL6.